A 253-amino-acid chain; its full sequence is 2-C-methyl-D-erythritol 4-phosphate cytidylyltransferase (253 aa).

The protein belongs to the IspD/TarI cytidylyltransferase family. IspD subfamily.

It catalyses the reaction 2-C-methyl-D-erythritol 4-phosphate + CTP + H(+) = 4-CDP-2-C-methyl-D-erythritol + diphosphate. It participates in isoprenoid biosynthesis; isopentenyl diphosphate biosynthesis via DXP pathway; isopentenyl diphosphate from 1-deoxy-D-xylulose 5-phosphate: step 2/6. In terms of biological role, catalyzes the formation of 4-diphosphocytidyl-2-C-methyl-D-erythritol from CTP and 2-C-methyl-D-erythritol 4-phosphate (MEP). The chain is 2-C-methyl-D-erythritol 4-phosphate cytidylyltransferase from Idiomarina loihiensis (strain ATCC BAA-735 / DSM 15497 / L2-TR).